The sequence spans 113 residues: Iron-sulfur cluster insertion protein ErpA (113 aa).

Cysteine 41, cysteine 105, and cysteine 107 together coordinate iron-sulfur cluster.

Belongs to the HesB/IscA family. Homodimer. Iron-sulfur cluster serves as cofactor.

In terms of biological role, required for insertion of 4Fe-4S clusters for at least IspG. The chain is Iron-sulfur cluster insertion protein ErpA from Actinobacillus pleuropneumoniae serotype 7 (strain AP76).